A 212-amino-acid polypeptide reads, in one-letter code: uncharacterized protein (212 aa).

This is an uncharacterized protein from Dryophytes versicolor (chameleon treefrog).